Reading from the N-terminus, the 163-residue chain is Ribonuclease P protein subunit p25-like protein (163 aa).

Disordered stretches follow at residues 1 to 22 (MEHY…PQLP) and 129 to 163 (NECG…DTRS). Over residues 143-152 (GSMPSSSCGP) the composition is skewed to low complexity. Basic residues predominate over residues 153–163 (RSRRRARDTRS).

Belongs to the histone-like Alba family.

The protein localises to the nucleus. In terms of biological role, may be a component of ribonuclease P or MRP. This is Ribonuclease P protein subunit p25-like protein (RPP25L) from Homo sapiens (Human).